Consider the following 297-residue polypeptide: Cell division protein FtsX (297 aa).

The Cytoplasmic portion of the chain corresponds to 1 to 21; the sequence is MRFGFLLNEVLTGFRRNVTMT. The chain crosses the membrane as a helical span at residues 22-42; it reads IAMILTTAISVGLFGGGMLVV. Topologically, residues 43-171 are extracellular; sequence RLADSSRAIY…LFAVLDGLSN (129 aa). Residues 172–192 traverse the membrane as a helical segment; it reads AAFAVALVQAIGAILLIANMV. The Cytoplasmic segment spans residues 193–219; it reads QVAAYTRRTEIGIMRLVGASRWYTQLP. The chain crosses the membrane as a helical span at residues 220–240; sequence FLVEAMLAATMGVGIAVAGLM. The Extracellular segment spans residues 241–267; that stretch reads VVRALFLENALNQFYQANLIAKVDYAD. Residues 268–288 traverse the membrane as a helical segment; that stretch reads ILFITPWLLLLGVAMSGLTAY. Residues 289 to 297 lie on the Cytoplasmic side of the membrane; it reads LTLRLYVRR.

It belongs to the ABC-4 integral membrane protein family. FtsX subfamily. Forms a membrane-associated complex with FtsE.

Its subcellular location is the cell membrane. Its function is as follows. Part of the ABC transporter FtsEX involved in cellular division. This chain is Cell division protein FtsX, found in Mycobacterium tuberculosis (strain ATCC 25177 / H37Ra).